A 223-amino-acid chain; its full sequence is Phosphoribosylformylglycinamidine synthase subunit PurQ (223 aa).

Positions 4-223 constitute a Glutamine amidotransferase type-1 domain; the sequence is RIGVITFPGT…FQSVLSTLVS (220 aa). The Nucleophile role is filled by Cys87. Active-site residues include His195 and Glu197.

As to quaternary structure, part of the FGAM synthase complex composed of 1 PurL, 1 PurQ and 2 PurS subunits.

It is found in the cytoplasm. It catalyses the reaction N(2)-formyl-N(1)-(5-phospho-beta-D-ribosyl)glycinamide + L-glutamine + ATP + H2O = 2-formamido-N(1)-(5-O-phospho-beta-D-ribosyl)acetamidine + L-glutamate + ADP + phosphate + H(+). The enzyme catalyses L-glutamine + H2O = L-glutamate + NH4(+). The protein operates within purine metabolism; IMP biosynthesis via de novo pathway; 5-amino-1-(5-phospho-D-ribosyl)imidazole from N(2)-formyl-N(1)-(5-phospho-D-ribosyl)glycinamide: step 1/2. Part of the phosphoribosylformylglycinamidine synthase complex involved in the purines biosynthetic pathway. Catalyzes the ATP-dependent conversion of formylglycinamide ribonucleotide (FGAR) and glutamine to yield formylglycinamidine ribonucleotide (FGAM) and glutamate. The FGAM synthase complex is composed of three subunits. PurQ produces an ammonia molecule by converting glutamine to glutamate. PurL transfers the ammonia molecule to FGAR to form FGAM in an ATP-dependent manner. PurS interacts with PurQ and PurL and is thought to assist in the transfer of the ammonia molecule from PurQ to PurL. In Corynebacterium jeikeium (strain K411), this protein is Phosphoribosylformylglycinamidine synthase subunit PurQ.